A 460-amino-acid polypeptide reads, in one-letter code: Keratin, type I cytoskeletal 27 (460 aa).

Residues 1 to 83 form a head region; sequence MSVRFSSASR…GNEHGLLSGN (83 aa). Residues 84–119 are coil 1A; the sequence is EKVTMQNLNDRLASYLDNVRALEEANADLEQKIKGW. In terms of domain architecture, IF rod spans 84 to 399; the sequence is EKVTMQNLND…RLIDGEDGSC (316 aa). The tract at residues 120 to 141 is linker 1; the sequence is YEKFGPGSCRGLDHDYSRYFTV. A coil 1B region spans residues 142-233; that stretch reads IDDLRNQIIS…KNHEEEMKAL (92 aa). A linker 12 region spans residues 234 to 256; it reads QCAAGGNVNVEMNAAPGVDLTVL. Positions 257–395 are coil 2; the sequence is LNNMRAEYEA…ETYCRLIDGE (139 aa). Residues 396 to 460 are tail; sequence DGSCAKSKGY…NVKSEQRVPS (65 aa). The tract at residues 435–460 is disordered; that stretch reads LSSRVHSVEEKSTKVNNVKSEQRVPS. The segment covering 448-460 has biased composition (polar residues); that stretch reads KVNNVKSEQRVPS.

Belongs to the intermediate filament family. In terms of assembly, heterotetramer of two type I and two type II keratins. Interacts with KRT6A to form filaments.

Its subcellular location is the cytoplasm. Its function is as follows. Essential for the proper assembly of type I and type II keratin protein complexes and formation of keratin intermediate filaments in the inner root sheath (irs). This Bos taurus (Bovine) protein is Keratin, type I cytoskeletal 27.